The sequence spans 368 residues: MEMKVLILVGVRLLFLPTTVCQSGMKHVSDNSALTAESFNGNEHSFEEFPLSDIEGWTGATTTIKAKCPEESITTLHVNNATMGYLRSSLSTKVIPAIYILVFVIGVPANIVTLWKLSSRTKSICLVIFHTNLAIADLLFCVTLPFKIAYHLNGNDWVFGEVMCRVTTVAFYGNMYCAILILTCMGINRYLATVHPFTYRKLPKRNFTLLMCGVVWVMVVLYMLPLAILKQEYHLVQPGITTCHDVHDTCESPLPFQFYYFVSLAFFGFLIPFVVSVFCYTTLIHKLNAQDRKWLRYIKAVLLILVIFTICFAPTNIILIIHHANYYYSNTDSLYFMYLIALCLGSLNSCLDPFLYFIMSKIVDQLTS.

The N-terminal stretch at 1–21 is a signal peptide; the sequence is MEMKVLILVGVRLLFLPTTVC. Positions 22–37 are cleaved as a propeptide — removed for receptor activation; that stretch reads QSGMKHVSDNSALTAE. Residues 38-93 lie on the Extracellular side of the membrane; it reads SFNGNEHSFEEFPLSDIEGWTGATTTIKAKCPEESITTLHVNNATMGYLRSSLSTK. An N-linked (GlcNAc...) asparagine glycan is attached at N80. A helical membrane pass occupies residues 94–114; sequence VIPAIYILVFVIGVPANIVTL. At 115 to 123 the chain is on the cytoplasmic side; the sequence is WKLSSRTKS. Residues 124–144 form a helical membrane-spanning segment; it reads ICLVIFHTNLAIADLLFCVTL. Residues 145–166 are Extracellular-facing; it reads PFKIAYHLNGNDWVFGEVMCRV. C164 and C243 are joined by a disulfide. Residues 167-187 traverse the membrane as a helical segment; sequence TTVAFYGNMYCAILILTCMGI. At 188-208 the chain is on the cytoplasmic side; that stretch reads NRYLATVHPFTYRKLPKRNFT. The chain crosses the membrane as a helical span at residues 209–229; that stretch reads LLMCGVVWVMVVLYMLPLAIL. The Extracellular segment spans residues 230–257; sequence KQEYHLVQPGITTCHDVHDTCESPLPFQ. A helical transmembrane segment spans residues 258-278; it reads FYYFVSLAFFGFLIPFVVSVF. At 279–300 the chain is on the cytoplasmic side; sequence CYTTLIHKLNAQDRKWLRYIKA. A helical transmembrane segment spans residues 301–321; that stretch reads VLLILVIFTICFAPTNIILII. Topologically, residues 322-338 are extracellular; sequence HHANYYYSNTDSLYFMY. The chain crosses the membrane as a helical span at residues 339-359; the sequence is LIALCLGSLNSCLDPFLYFIM. At 360 to 368 the chain is on the cytoplasmic side; that stretch reads SKIVDQLTS.

The protein belongs to the G-protein coupled receptor 1 family. In terms of assembly, interacts with INSC/inscuteable and GPSM2. A proteolytic cleavage generates a new N-terminus that functions as a tethered ligand.

It localises to the cell membrane. Receptor for activated thrombin coupled to G proteins that stimulate phosphoinositide hydrolysis. This is Proteinase-activated receptor 3 (F2rl2) from Rattus norvegicus (Rat).